The sequence spans 255 residues: Imidazole glycerol phosphate synthase subunit HisF (255 aa).

Catalysis depends on residues Asp-12 and Asp-131.

It belongs to the HisA/HisF family. Heterodimer of HisH and HisF.

It is found in the cytoplasm. The enzyme catalyses 5-[(5-phospho-1-deoxy-D-ribulos-1-ylimino)methylamino]-1-(5-phospho-beta-D-ribosyl)imidazole-4-carboxamide + L-glutamine = D-erythro-1-(imidazol-4-yl)glycerol 3-phosphate + 5-amino-1-(5-phospho-beta-D-ribosyl)imidazole-4-carboxamide + L-glutamate + H(+). Its pathway is amino-acid biosynthesis; L-histidine biosynthesis; L-histidine from 5-phospho-alpha-D-ribose 1-diphosphate: step 5/9. In terms of biological role, IGPS catalyzes the conversion of PRFAR and glutamine to IGP, AICAR and glutamate. The HisF subunit catalyzes the cyclization activity that produces IGP and AICAR from PRFAR using the ammonia provided by the HisH subunit. This is Imidazole glycerol phosphate synthase subunit HisF from Vesicomyosocius okutanii subsp. Calyptogena okutanii (strain HA).